The following is a 188-amino-acid chain: Acireductone dioxygenase (188 aa).

Fe(2+)-binding residues include His97, His99, Glu103, and His141. The Ni(2+) site is built by His97, His99, Glu103, and His141.

This sequence belongs to the acireductone dioxygenase (ARD) family. Monomer. It depends on Fe(2+) as a cofactor. Ni(2+) serves as cofactor.

It catalyses the reaction 1,2-dihydroxy-5-(methylsulfanyl)pent-1-en-3-one + O2 = 3-(methylsulfanyl)propanoate + CO + formate + 2 H(+). The catalysed reaction is 1,2-dihydroxy-5-(methylsulfanyl)pent-1-en-3-one + O2 = 4-methylsulfanyl-2-oxobutanoate + formate + 2 H(+). Its pathway is amino-acid biosynthesis; L-methionine biosynthesis via salvage pathway; L-methionine from S-methyl-5-thio-alpha-D-ribose 1-phosphate: step 5/6. Catalyzes 2 different reactions between oxygen and the acireductone 1,2-dihydroxy-3-keto-5-methylthiopentene (DHK-MTPene) depending upon the metal bound in the active site. Fe-containing acireductone dioxygenase (Fe-ARD) produces formate and 2-keto-4-methylthiobutyrate (KMTB), the alpha-ketoacid precursor of methionine in the methionine recycle pathway. Ni-containing acireductone dioxygenase (Ni-ARD) produces methylthiopropionate, carbon monoxide and formate, and does not lie on the methionine recycle pathway. The chain is Acireductone dioxygenase from Xylella fastidiosa (strain M23).